Reading from the N-terminus, the 595-residue chain is Methionine--tRNA ligase (595 aa).

The 'HIGH' region motif lies at 11-21; the sequence is PYANGPRHIGH. Residues cysteine 143, cysteine 146, cysteine 156, and cysteine 159 each contribute to the Zn(2+) site. A 'KMSKS' region motif is present at residues 350–354; sequence KFSSS. Residue serine 353 coordinates ATP.

This sequence belongs to the class-I aminoacyl-tRNA synthetase family. MetG type 1 subfamily. As to quaternary structure, monomer. Zn(2+) serves as cofactor.

The protein localises to the cytoplasm. The catalysed reaction is tRNA(Met) + L-methionine + ATP = L-methionyl-tRNA(Met) + AMP + diphosphate. Its function is as follows. Is required not only for elongation of protein synthesis but also for the initiation of all mRNA translation through initiator tRNA(fMet) aminoacylation. The sequence is that of Methionine--tRNA ligase from Nocardioides sp. (strain ATCC BAA-499 / JS614).